The primary structure comprises 815 residues: Probable disease resistance protein At5g66910 (815 aa).

The RPW8 domain occupies 1–150 (MVVVDWLGLG…NINKKLDRLS (150 aa)). NB-ARC domains lie at 156 to 283 (PLVS…DVWQ) and 341 to 440 (SPDE…DIWM). 196–203 (GPPGCGKT) is an ATP binding site. LRR repeat units follow at residues 656–678 (NLQE…IPEV), 680–702 (SLKT…IGNL), 704–726 (RLEV…TERL), and 728–750 (NLRS…IGKL).

Belongs to the disease resistance NB-LRR family.

Functionally, probable disease resistance protein. The sequence is that of Probable disease resistance protein At5g66910 from Arabidopsis thaliana (Mouse-ear cress).